The sequence spans 237 residues: MTPKRALISLTSYHGPFYKDGAKTGVFVVEILRSFDTFEKHGFEVDFVSETGGFGWDEHYLPKSFIGGEDKMNFETKNSAFNKALARIKTANEVNASDYKIFFASAGHGALFDYPKAKNLQDIASKIYANGGVIAAICHGPLLFDGLIDIKTTRPLIEGKAITGFPLEGEIALGVDDILRSRKLTTVERVANKNGAKYLAPIHPWDDYSITDGKLVTGVNANSSYSTTIRAINALYS.

Catalysis depends on residues Cys-138, His-139, and Glu-170.

Belongs to the peptidase C56 family. HSP31-like subfamily. As to quaternary structure, homodimer.

Its subcellular location is the cytoplasm. The protein resides in the P-body. The catalysed reaction is methylglyoxal + H2O = (R)-lactate + H(+). Catalyzes the conversion of methylglyoxal (MG) to D-lactate in a single glutathione (GSH)-independent step. May play a role in detoxifying endogenously produced glyoxals. Involved in protection against reactive oxygen species (ROS). Important for viability in stationary phase. May negatively regulate TORC1 in response to nutrient limitation. The protein is Probable glutathione-independent glyoxalase HSP32 of Saccharomyces cerevisiae (strain ATCC 204508 / S288c) (Baker's yeast).